The chain runs to 470 residues: mRNA export factor ICP27 homolog (470 aa).

Disordered regions lie at residues 1-31 and 73-202; these read MALS…TGGD and FSAS…AGDR. The segment covering 73 to 85 has biased composition (polar residues); that stretch reads FSASPQRAQPSNP. Basic residues-rich tracts occupy residues 94–107 and 178–187; these read HGRR…RRNN and RVHRNRRRGN. Residues cysteine 359, histidine 437, cysteine 441, and cysteine 446 each contribute to the Zn(2+) site. A CHC2-type zinc finger spans residues 359 to 446; it reads CYLSSSGSPT…HKRRCKADTC (88 aa).

It belongs to the HHV-1 ICP27 protein family. Homodimer. Homodimerization is required for transactivation. Associates in a complex with RNA, and host export factors NXF1/TAP and ALYREF; these interactions allow nuclear export of viral transcripts. Interacts with three host shuttling SR proteins SRSF1, SRSF3 and SRSF7. Interacts with host SRPK1. Interacts with IE62; this interaction enhances IE62 transactivation.

It is found in the host cytoplasm. The protein localises to the host nucleus. In terms of biological role, multifunctional regulator of the expression of viral genes that mediates nuclear export of viral intronless mRNAs. This immediate early (EI) protein promotes the nuclear export of viral intronless mRNAs by interacting with mRNAs and host NXF1/TAP. The chain is mRNA export factor ICP27 homolog from Equine herpesvirus 1 (strain Kentucky A) (EHV-1).